The sequence spans 32 residues: Cytochrome c3, 10 kDa (32 aa).

Residues His16, Cys25, Cys28, and His29 each contribute to the heme site.

In terms of assembly, monomer. In terms of processing, binds 1 heme group per subunit.

It localises to the periplasm. In terms of biological role, participates in sulfate respiration coupled with phosphorylation by transferring electrons from the enzyme dehydrogenase to ferredoxin. This chain is Cytochrome c3, 10 kDa, found in Desulfuromonas acetoxidans (Chloropseudomonas ethylica).